The chain runs to 219 residues: Glycosylphosphatidylinositol anchor biosynthesis protein 11 (219 aa).

The Cytoplasmic segment spans residues 1–45 (MPAKKRTRKTVKKTVSFSDDTTLTTHQNREKKNVDHDRPPVYVRK). S16 is modified (phosphoserine). A helical transmembrane segment spans residues 46–66 (TPLMTFPYHLVALLYYYVFVS). Residue S67 is a topological domain, lumenal. A helical membrane pass occupies residues 68-88 (NFNTVKLLSFLIPTQVAYLVL). Residues 89–108 (QFNKCTVYGNKIIKINYSLT) are Cytoplasmic-facing. Residues 109-129 (IICLGVTFLLSFPTMLLTILF) form a helical membrane-spanning segment. Over 130–135 (GAPLMD) the chain is Lumenal. A helical membrane pass occupies residues 136-156 (LLWETWLLSLHFAFLAYPAVY). Residues 157-170 (SVFNCDFKVGLWKK) lie on the Cytoplasmic side of the membrane. The chain crosses the membrane as a helical span at residues 171-191 (YFIFIVVGGWISCVVIPLDWD). The Lumenal portion of the chain corresponds to 192 to 198 (RDWQNWP). A helical membrane pass occupies residues 199-217 (IPIVVGGYLGALVGYTIGA). The Cytoplasmic portion of the chain corresponds to 218–219 (YI).

The protein belongs to the PIGF family.

Its subcellular location is the endoplasmic reticulum membrane. The protein operates within glycolipid biosynthesis; glycosylphosphatidylinositol-anchor biosynthesis. Its function is as follows. Acts in the GPI biosynthetic pathway between GlcNAc-PI synthesis and GPI transfer to protein. Required for the formation of complete GPI precursors CP1 and CP2. In Saccharomyces cerevisiae (strain ATCC 204508 / S288c) (Baker's yeast), this protein is Glycosylphosphatidylinositol anchor biosynthesis protein 11 (GPI11).